Consider the following 69-residue polypeptide: Magnetosome protein MamI (69 aa).

The Cytoplasmic segment spans residues 1-2 (MP). The helical transmembrane segment at 3 to 23 (SVIFGLLALAIGLLGLTAWWW) threads the bilayer. Topologically, residues 24-31 (SVTEFLRG) are lumenal. A helical membrane pass occupies residues 32–52 (AVPVALIIFGLVALAAGVQSV). Residues 53–69 (RVPPAGKRANSDPNIDG) are Cytoplasmic-facing.

Belongs to the magnetosome MamI protein family.

The protein localises to the magnetosome membrane. Functionally, may be involved in an early stage of magnetosome nucleation. Not essential for formation of magnetosome membrane vesicles, it is probably functionally redundant with other proteins. May bind magnetite. One of 7 genes (mamLQBIEMO) able to induce magnetosome membrane biogenesis; coexpression of mamLQRBIEMO in a deletion of the 17 gene mamAB operon restores magnetosome vesicle formation but not magnetite biosynthesis. The polypeptide is Magnetosome protein MamI (Magnetospirillum gryphiswaldense (strain DSM 6361 / JCM 21280 / NBRC 15271 / MSR-1)).